Consider the following 339-residue polypeptide: NADH-quinone oxidoreductase subunit H (339 aa).

9 consecutive transmembrane segments (helical) span residues 9-29, 50-70, 82-102, 115-135, 161-181, 187-207, 235-255, 275-295, and 311-331; these read IFPL…LILC, PNVV…KLLF, ILFI…WAVI, VGVL…IIAG, MGLV…SGII, MPWW…ISVL, MGFA…SAMT, IPGF…FLWI, and GWKV…SVLV.

Belongs to the complex I subunit 1 family. In terms of assembly, NDH-1 is composed of 14 different subunits. Subunits NuoA, H, J, K, L, M, N constitute the membrane sector of the complex.

It localises to the cell inner membrane. The enzyme catalyses a quinone + NADH + 5 H(+)(in) = a quinol + NAD(+) + 4 H(+)(out). Its function is as follows. NDH-1 shuttles electrons from NADH, via FMN and iron-sulfur (Fe-S) centers, to quinones in the respiratory chain. The immediate electron acceptor for the enzyme in this species is believed to be ubiquinone. Couples the redox reaction to proton translocation (for every two electrons transferred, four hydrogen ions are translocated across the cytoplasmic membrane), and thus conserves the redox energy in a proton gradient. This subunit may bind ubiquinone. The chain is NADH-quinone oxidoreductase subunit H from Rickettsia felis (strain ATCC VR-1525 / URRWXCal2) (Rickettsia azadi).